The primary structure comprises 311 residues: MSVVNNRVALTNLVSMEALTTEEVLGLINRGSEYKAGKVVISDHQKDLVANLFFENSTRTHKSFEVAEKKLGLTVLDFNADASAVNKGESLYDTVLTMSALGTDICVIRHPEDDYYKELVESPTITASIVNGGDGSGQHPSQCLLDLLTIYEEFGRFEGLKIAIAGDLTHSRVAKSNMQILKRLGAELYFYGPEEWYSEAFNAYGTYIAIDQIIKELDVLMLLRVQHERHDGHQSFSKEGYHQAFGLTQERYQQLKDSAIIMHPAPVNRDVEIADSLVEAPKARIVSQMANGVFVRMAIIEAILNGRNKNS.

Residues R59 and T60 each coordinate carbamoyl phosphate. L-aspartate is bound at residue K87. Carbamoyl phosphate-binding residues include R109, H139, and Q142. Residues R172 and R224 each coordinate L-aspartate. Residues A265 and P266 each coordinate carbamoyl phosphate.

It belongs to the aspartate/ornithine carbamoyltransferase superfamily. ATCase family. In terms of assembly, heterododecamer (2C3:3R2) of six catalytic PyrB chains organized as two trimers (C3), and six regulatory PyrI chains organized as three dimers (R2).

It carries out the reaction carbamoyl phosphate + L-aspartate = N-carbamoyl-L-aspartate + phosphate + H(+). It functions in the pathway pyrimidine metabolism; UMP biosynthesis via de novo pathway; (S)-dihydroorotate from bicarbonate: step 2/3. Its function is as follows. Catalyzes the condensation of carbamoyl phosphate and aspartate to form carbamoyl aspartate and inorganic phosphate, the committed step in the de novo pyrimidine nucleotide biosynthesis pathway. The chain is Aspartate carbamoyltransferase catalytic subunit from Streptococcus pyogenes serotype M1.